The primary structure comprises 117 residues: Large ribosomal subunit protein uL18 (117 aa).

Belongs to the universal ribosomal protein uL18 family. As to quaternary structure, part of the 50S ribosomal subunit; part of the 5S rRNA/L5/L18/L25 subcomplex. Contacts the 5S and 23S rRNAs.

Functionally, this is one of the proteins that bind and probably mediate the attachment of the 5S RNA into the large ribosomal subunit, where it forms part of the central protuberance. This is Large ribosomal subunit protein uL18 from Actinobacillus succinogenes (strain ATCC 55618 / DSM 22257 / CCUG 43843 / 130Z).